A 172-amino-acid polypeptide reads, in one-letter code: Disulfide bond formation protein B (172 aa).

The Cytoplasmic portion of the chain corresponds to 1–13 (MNWLAQLPTQRTP). Residues 14-30 (WLLFSGIVFLLEITALF) form a helical membrane-spanning segment. At 31 to 48 (FQYKMGLAPCIMCIYQRT) the chain is on the periplasmic side. A disulfide bond links Cys40 and Cys43. Residues 49–64 (AVLGLLIAGIIGTSNP) traverse the membrane as a helical segment. The Cytoplasmic segment spans residues 65–71 (EHRGVRL). Residues 72–89 (LAYSVWAVSSVWGFIIAR) traverse the membrane as a helical segment. Topologically, residues 90–145 (EHIEMQTTTDPFAFSCEFEPNFPAFMPLHEWIPSFFAATGDCGNIDWQFAGLSMPA) are periplasmic. Cys105 and Cys131 are joined by a disulfide. A helical membrane pass occupies residues 146-164 (WMEVIFALFAATLFLLVTS). Residues 165–172 (RLMTKRSL) are Cytoplasmic-facing.

It belongs to the DsbB family.

It localises to the cell inner membrane. Its function is as follows. Required for disulfide bond formation in some periplasmic proteins. Acts by oxidizing the DsbA protein. The sequence is that of Disulfide bond formation protein B from Pseudoalteromonas translucida (strain TAC 125).